A 354-amino-acid chain; its full sequence is C-C chemokine receptor type 5 (354 aa).

At 1–32 (MDFQGSVPTYSYDIDYGMSAPCQKINVKQIAA) the chain is on the extracellular side. S6 is a glycosylation site (O-linked (GalNAc...) serine). 3 positions are modified to sulfotyrosine: Y10, Y12, and Y16. 2 cysteine pairs are disulfide-bonded: C22/C271 and C103/C180. Residues 33-60 (QLLPPLYSLVFIFGFVGNMMVFLILISC) traverse the membrane as a helical segment. The Cytoplasmic portion of the chain corresponds to 61–70 (KKLKSVTDIY). A helical membrane pass occupies residues 71–91 (LLNLAISDLLFLLTLPFWAHY). The Extracellular segment spans residues 92–104 (AANEWVFGNIMCK). The chain crosses the membrane as a helical span at residues 105-126 (VFTGLYHIGYFGGIFFIILLTI). Over 127–143 (DRYLAIVHAVFALKVRT) the chain is Cytoplasmic. The helical transmembrane segment at 144 to 168 (VNFGVITSVVTWAVAVFASLPEIIF) threads the bilayer. Residues 169 to 200 (TRSQKEGFHYTCSPHFPHTQYHFWKSFQTLKM) are Extracellular-facing. The chain crosses the membrane as a helical span at residues 201-220 (VILSLILPLLVMVICYSGIL). The Cytoplasmic segment spans residues 221 to 237 (HTLFRCRNEKKRHRAVR). A helical transmembrane segment spans residues 238–262 (LIFAIMIVYFLFWTPYNIVLLLTTF). Over 263–279 (QEFFGLNNCSSSNRLDQ) the chain is Extracellular. Residues 280–303 (AMQATETLGMTHCCLNPVIYAFVG) traverse the membrane as a helical segment. The Cytoplasmic segment spans residues 304–354 (EKFRSYLSVFFRKHMVKRFCKRCSIFQQDNPDRASSVYTRSTGEHEVSTGL). Residues C323 and C326 are each lipidated (S-palmitoyl cysteine). Residues S338, S339, S344, and S351 each carry the phosphoserine; by BARK1 modification.

It belongs to the G-protein coupled receptor 1 family. Interacts with PRAF2. Efficient ligand binding to CCL3/MIP-1alpha and CCL4/MIP-1beta requires sulfation, O-glycosylation and sialic acid modifications. Glycosylation on Ser-6 is required for efficient binding of CCL4. Interacts with GRK2. Interacts with ARRB1 and ARRB2. Interacts with CNIH4. Interacts with S100A4; this interaction stimulates T-lymphocyte chemotaxis. In terms of processing, sulfated on at least 2 of the N-terminal tyrosines. Sulfation is required for efficient binding of the chemokines, CCL3 and CCL4. Post-translationally, O-glycosylated, but not N-glycosylated. Ser-6 appears to be the major site. Also sialylated glycans present which contribute to chemokine binding. Palmitoylation in the C-terminal is important for cell surface expression. In terms of processing, phosphorylation on serine residues in the C-terminal is stimulated by binding CC chemokines especially by APO-RANTES.

It localises to the cell membrane. Receptor for a number of inflammatory CC-chemokines including CCL3/MIP-1-alpha, CCL4/MIP-1-beta and RANTES and subsequently transduces a signal by increasing the intracellular calcium ion level. May play a role in the control of granulocytic lineage proliferation or differentiation. Participates in T-lymphocyte migration to the infection site by acting as a chemotactic receptor. The protein is C-C chemokine receptor type 5 (Ccr5) of Mus musculus (Mouse).